The sequence spans 357 residues: DNA replication and repair protein RecF (357 aa).

30–37 is an ATP binding site; that stretch reads GANGSGKT.

It belongs to the RecF family.

It is found in the cytoplasm. The RecF protein is involved in DNA metabolism; it is required for DNA replication and normal SOS inducibility. RecF binds preferentially to single-stranded, linear DNA. It also seems to bind ATP. The sequence is that of DNA replication and repair protein RecF from Shigella flexneri serotype 5b (strain 8401).